A 351-amino-acid chain; its full sequence is Putative NBPF family member NBPF5 (351 aa).

Coiled coils occupy residues 10-43 (SERA…EKFL) and 69-115 (DSVL…KLRE). Residues 157 to 285 (HLVHKLSPEN…VPPRHHDKSN (129 aa)) are disordered. Over residues 165–179 (ENDEDEDEDEDDKDE) the composition is skewed to acidic residues. In terms of domain architecture, Olduvai spans 174-261 (EDDKDEEVEK…EEEEALNIPP (88 aa)). Residues 192-202 (EVQKTEEKEVP) show a composition bias toward basic and acidic residues. The segment covering 214 to 226 (SNSHNPSNSNQPH) has biased composition (low complexity). 2 stretches are compositionally biased toward basic and acidic residues: residues 232–251 (TFKE…HPHD) and 264–273 (QNDHEEEEGK).

Belongs to the NBPF family. As to expression, expressed in brain and medulla.

The protein localises to the cytoplasm. The protein is Putative NBPF family member NBPF5 of Homo sapiens (Human).